Consider the following 137-residue polypeptide: DNA-binding protein H-NS (137 aa).

A DNA-binding region spans residues 112–117 (QGRTPA).

This sequence belongs to the histone-like protein H-NS family. As to quaternary structure, homodimer that oligomerizes on DNA into higher-order complexes that form bridges between disparate regions of DNA compacting it. Interacts with Hha, Cnu and StpA.

It localises to the cytoplasm. The protein resides in the nucleoid. In terms of biological role, a DNA-binding protein implicated in transcriptional repression and chromosome organization and compaction. Binds nucleation sites in AT-rich DNA and bridges them, forming higher-order nucleoprotein complexes and condensing the chromosome. As many horizontally transferred genes are AT-rich, it plays a central role in silencing foreign genes. A subset of genes are repressed by H-NS in association with other proteins. This chain is DNA-binding protein H-NS (hns), found in Escherichia coli O6:H1 (strain CFT073 / ATCC 700928 / UPEC).